We begin with the raw amino-acid sequence, 563 residues long: Lipase 1 (563 aa).

The N-terminal stretch at 1–19 is a signal peptide; that stretch reads MVSKTFFLAAALNVVGTLA. The residue at position 20 (glutamine 20) is a Pyrrolidone carboxylic acid. Cysteine 80 and cysteine 124 are oxidised to a cystine. Serine 236 acts as the Acyl-ester intermediate in catalysis. Cysteine 295 and cysteine 307 are joined by a disulfide. N-linked (GlcNAc...) asparagine glycosylation is present at asparagine 302. Glutamate 373 acts as the Charge relay system in catalysis. A glycan (N-linked (GlcNAc...) asparagine) is linked at asparagine 383. The active-site Charge relay system is the histidine 482.

It belongs to the type-B carboxylesterase/lipase family. Monomer.

The protein resides in the secreted. It carries out the reaction a triacylglycerol + H2O = a diacylglycerol + a fatty acid + H(+). Functionally, hydrolyzes all ester bonds in triglyceride and displays a high affinity for triolein. For unsaturated substrates having long fatty acyl chains (C18:2 cis-9, cis-12 and C18:3 cis-9, cis-12, cis-15) GCL I shows higher specific activity than GCL II, whereas GCL II shows higher specific activity against saturated substrates having short fatty acid chains (C8, C10, C12 and C14). This is Lipase 1 (LIP1) from Geotrichum candidum (Oospora lactis).